Consider the following 1035-residue polypeptide: Retinoblastoma-related protein (1035 aa).

The disordered stretch occupies residues 403–426; that stretch reads ITSPLSPHRSPASHANGIPGSANS. The tract at residues 431 to 632 is domain A; sequence TPVSTAMTTA…EKGSSLYNSL (202 aa). The tract at residues 431-885 is pocket; the sequence is TPVSTAMTTA…NEIFIPAAKP (455 aa). The tract at residues 633–753 is spacer; the sequence is TVARPALSAE…PGGGGETCAE (121 aa). Disordered regions lie at residues 674–697 and 721–748; these read PSLQ…PKRP and GNLK…GGGG. Residues 754–885 form a domain B region; it reads TGINVFFTKI…NEIFIPAAKP (132 aa).

This sequence belongs to the retinoblastoma protein (RB) family.

The protein resides in the nucleus. Its function is as follows. Regulator of biological processes that recruits a histone deacetylase to control gene transcription. May play a role in the entry into mitosis, negatively regulating the cell proliferation. Formation of stable complexes with geminiviridae replication-associated proteins may create a cellular environment which favors viral DNA replication. This chain is Retinoblastoma-related protein (RBL901), found in Populus trichocarpa (Western balsam poplar).